We begin with the raw amino-acid sequence, 179 residues long: Peptide deformylase 2 (179 aa).

Positions 102 and 144 each coordinate Fe cation. Residue Glu-145 is part of the active site. Residue His-148 coordinates Fe cation.

This sequence belongs to the polypeptide deformylase family. It depends on Fe(2+) as a cofactor.

The enzyme catalyses N-terminal N-formyl-L-methionyl-[peptide] + H2O = N-terminal L-methionyl-[peptide] + formate. In terms of biological role, removes the formyl group from the N-terminal Met of newly synthesized proteins. Requires at least a dipeptide for an efficient rate of reaction. N-terminal L-methionine is a prerequisite for activity but the enzyme has broad specificity at other positions. This chain is Peptide deformylase 2, found in Nostoc sp. (strain PCC 7120 / SAG 25.82 / UTEX 2576).